A 131-amino-acid chain; its full sequence is MAFTRSIALFAGLALAASSAQGATILGGYTQKNATSDDIELLTQATSSANMYNKNVDTRICLIAIENLETQTVAGTNYKFQVAGCPVETDDELGACDDRNCDYSSYNIVIFSQPWSDTIEVTSITPAEYQG.

The first 22 residues, 1–22 (MAFTRSIALFAGLALAASSAQG), serve as a signal peptide directing secretion. Asn-33 carries N-linked (GlcNAc...) asparagine glycosylation. The Secondary area of contact motif lies at 71-75 (QTVAG).

This sequence belongs to the cystatin family.

The protein resides in the secreted. Secreted effector that interacts with and inhibits host apoplastic pathogenesis-related papain-like cysteine proteases. Inhibition of host proteases by a pathogen extracellular protease inhibitor forms a specific type of defense-counterdefense mechanism between plants and microbial pathogens. This is Cystatin-like cysteine protease inhibitor EPIC3 from Phytophthora infestans (strain T30-4) (Potato late blight agent).